The primary structure comprises 161 residues: Transcription initiation factor TFIID subunit 12 (161 aa).

The interval 15–55 is disordered; the sequence is FSSIKPEPASTPPQGSMANSTAVVKIPGTPGAGGRLSPENN. Lys19 is covalently cross-linked (Glycyl lysine isopeptide (Lys-Gly) (interchain with G-Cter in SUMO2)). Residues 26–36 are compositionally biased toward polar residues; that stretch reads PPQGSMANSTA. Thr43 bears the Phosphothreonine mark. Ser51 is modified (phosphoserine). Thr59 carries the phosphothreonine modification. Residues 59-126 enclose the Histone-fold domain; it reads TKKKLQDLVR…QLHLERQWNM (68 aa).

The protein belongs to the TAF12 family. In terms of assembly, component of the TFIID basal transcription factor complex, composed of TATA-box-binding protein TBP, and a number of TBP-associated factors (TAFs), including TAF1, TAF2, TAF3, TAF4, TAF5, TAF6, TAF7, TAF8, TAF9, TAF10, TAF11, TAF12 and TAF13. Component of the TATA-binding protein-free TAF complex (TFTC), the PCAF histone acetylase complex and the STAGA transcription coactivator-HAT complex. Component of the PCAF complex, at least composed of TADA2L/ADA2, TADA3L/ADA3, TAF5L/PAF65-beta, SUPT3H, TAF6L, TAF9, TAF10, TAF12 and TRRAP. Component of the STAGA transcription coactivator-HAT complex, at least composed of SUPT3H, GCN5L2, TAF5L, TAF6L, STAF65-gamma/SUPT7L, TADA3L, TAD1L, TAF10, TAF12, TRRAP and TAF9. Interacts with ATF7 (via the transactivation domain); the interaction is prevented by sumoylation of ATF7. As to quaternary structure, interacts with TBP; the interaction is direct. Interacts with TAF10; the interaction is direct. Interacts with ATF7, promoting transactivation by ATF7. Does not promote the transactivation of ATF7. Ubiquitous.

It localises to the nucleus. In terms of biological role, the TFIID basal transcription factor complex plays a major role in the initiation of RNA polymerase II (Pol II)-dependent transcription. TFIID recognizes and binds promoters with or without a TATA box via its subunit TBP, a TATA-box-binding protein, and promotes assembly of the pre-initiation complex (PIC). The TFIID complex consists of TBP and TBP-associated factors (TAFs), including TAF1, TAF2, TAF3, TAF4, TAF5, TAF6, TAF7, TAF8, TAF9, TAF10, TAF11, TAF12 and TAF13. Component of the TATA-binding protein-free TAF complex (TFTC), the PCAF histone acetylase complex and the STAGA transcription coactivator-HAT complex. The sequence is that of Transcription initiation factor TFIID subunit 12 from Homo sapiens (Human).